The following is a 172-amino-acid chain: Putative F-box protein At3g13825 (172 aa).

One can recognise an F-box domain in the interval 1 to 51 (MTTLSNLSVDLVGEIFSRVPLISLSEVRCTCTTWNTLSWNILSENYVFGKA).

The chain is Putative F-box protein At3g13825 from Arabidopsis thaliana (Mouse-ear cress).